We begin with the raw amino-acid sequence, 358 residues long: MSGNTFGKAFRVTTWGESHGPAVGAVVDGCPPGIPLTEEAIQVMMDRRKPGSSAASTTRKEEDLVHILSGVFEGLTTGTPISLMIKNKDAKSSSYDQFKNLFRPGHGDLSYQRKYGIRDYKGGGRASARETAGRVAAGAVAGLLLERVGIKTFAYTLELGSVRAKNIDPEAVSKNPFACPDMEAAEKMEARVNEVRKDGDSLGGIVQVQAAGVPAGLGEPVFDKLDAQIAKAMMSIGAVKGVEIGAGFEAARLTGSVNNDPILEDGFETNNAGGTLSGVSSGQDIVVRVAVKPIPSISVPQQTIGLDGKADTIQVGGRHDISAIPRVNVVCEAMLNLVLADFVLRQAQVRALELFAKQ.

NADP(+) is bound at residue R48. FMN contacts are provided by residues 125–127, S277, 292–296, and R318; these read RAS and KPIPS.

The protein belongs to the chorismate synthase family. Homotetramer. It depends on FMNH2 as a cofactor.

The enzyme catalyses 5-O-(1-carboxyvinyl)-3-phosphoshikimate = chorismate + phosphate. It functions in the pathway metabolic intermediate biosynthesis; chorismate biosynthesis; chorismate from D-erythrose 4-phosphate and phosphoenolpyruvate: step 7/7. Functionally, catalyzes the anti-1,4-elimination of the C-3 phosphate and the C-6 proR hydrogen from 5-enolpyruvylshikimate-3-phosphate (EPSP) to yield chorismate, which is the branch point compound that serves as the starting substrate for the three terminal pathways of aromatic amino acid biosynthesis. This reaction introduces a second double bond into the aromatic ring system. The protein is Chorismate synthase of Desulfatibacillum aliphaticivorans.